A 447-amino-acid polypeptide reads, in one-letter code: Transducin beta-like protein 2 (447 aa).

Residues 38 to 72 (RSGRPACQKANGFPPDKSSGSKKQKQYQRIRKEKP) are disordered. A compositionally biased stretch (basic residues) spans 57–69 (GSKKQKQYQRIRK). 7 WD repeats span residues 88–127 (SHSGNISCMDFSSNGKYLATCADDRTIRIWSTKDFLQREH), 134–174 (VELD…DGGY), 186–226 (KHKA…STIN), 228–267 (NQMNNTHAAVSPCGRFVASCGFTPDVKVWEVCFGKKGEFQ), 277–316 (GHSAAVHSFAFSNDSRRMASVSKDGTWKLWDTDVEYKKKQ), 329–367 (AAGAAPCRLALSPNAQVLALASGSSIHLYNTRRGEKEEC), and 371–409 (VHGECIANLSFDITGRFLASCGDRAVRLFHNTPGHRAMV). A Glycyl lysine isopeptide (Lys-Gly) (interchain with G-Cter in SUMO2) cross-link involves residue K168. A Phosphothreonine; by ATM or ATR modification is found at T433.

The polypeptide is Transducin beta-like protein 2 (TBL2) (Homo sapiens (Human)).